Reading from the N-terminus, the 281-residue chain is Undecaprenyl-diphosphatase (281 aa).

A run of 7 helical transmembrane segments spans residues 45–65 (AFTN…VVVI), 86–106 (WQLW…GLIF), 114–134 (FQNF…FIYV), 148–168 (LVSL…LSLI), 196–216 (FFLG…KFIV), 224–244 (SQLF…LYVI), and 256–276 (FTFF…YGLM).

Belongs to the UppP family.

The protein resides in the cell membrane. The enzyme catalyses di-trans,octa-cis-undecaprenyl diphosphate + H2O = di-trans,octa-cis-undecaprenyl phosphate + phosphate + H(+). Functionally, catalyzes the dephosphorylation of undecaprenyl diphosphate (UPP). Confers resistance to bacitracin. The protein is Undecaprenyl-diphosphatase of Streptococcus mutans serotype c (strain ATCC 700610 / UA159).